Here is a 403-residue protein sequence, read N- to C-terminus: Octaketide synthase 1 (403 aa).

Cys-174 is an active-site residue. CoA is bound by residues Ser-281 and 318–321; that span reads GGRA.

The protein belongs to the thiolase-like superfamily. Chalcone/stilbene synthases family. Homodimer.

It functions in the pathway secondary metabolite biosynthesis; flavonoid biosynthesis. Functionally, catalyzes the iterative condensations of 8 molecules of malonyl-CoA to produce aromatic octaketides, SEK4 and SEK4b, the products of the minimal polyketide synthase for the benzoisochromanequinone actinorhodin. May be involved in the biosynthesis of the octaketide barbaloin. This is Octaketide synthase 1 from Aloe arborescens (Kidachi aloe).